The chain runs to 1159 residues: MAEGIGTFGTLSRDVLEERLMEARRTYRLNMGYAGLKQLPPGFVELVKKYNPHITELELSSNDLTDLPDELEEFRYLRILRLKYNQLKRIPAVVYRLPQLMVFDASGNRIQKVDDAIGHLSLLKELDVSGNEITTLPESLSTLPKLEVLQVENNRLELLPESLGELPGVIKMDLSTNNLRYLPASMGQLKKVQRIDVGNNLLTKVPPSMGHLKTLKEFNLRYNHLDDRYKAKVEEGLSKFLAFLREEEERERLEEIERLKPIGTPVGAYLEYRCKAEVGQVVKTDMGETTVDNRCWIRTGHTLTQVGSMLLIFGGQLQKDGSTTNDLFWMTMDRMEWHNQPCKGEKPPPRYNHAACYDEENNRLVVFGGRTAERKRLNDIYFLDLDSWTWFKPSTEGTAPTPREQAVATFWAGSMVLFGGHAIGGRTNDLFLLDLGAWQWSQPAFSGTAPSPRQACALCIGHGNLLFVHGGRNNFVLEDLHVMDFVSKNWTEIPCEGRVPPPRHSHRITVHRDQLYLLGGLDELGAQSVAMYRVALPAGQQDTYATSKPKWVEWDSELPYNKNRTATLWNGTISIYQLGSNTLGRVNDDDAEKGLDELRPKNAKRMRVQHTINTAGKMPRSFTQHSAHEARVLQYVQDFQRIFEELYPYRRPLYLTPRNECGVPKFVCTSLRPSQLVYTELYDLDGASQFVADFLSYEPLEDPLHPPDTLPSPMSALEWRAGDSFDMATVLASMLLGVGYNAFVVLGYAPGPVVQNDQRNTDLAATRTGAGAEEEEESGPCKFVHAWVMVLPGKREVTEAMFIEPSAGRKDVSYDLSDPTKWEPVFEDRGMRSRADGNADESETEGGGGLDDGEGVEAEVVPDIPPSWVPKLTIPRDAFDMRCPRHEIFARFGDCSRWDGMVERLVLYADEERTVVTEIRETFTRRRDKLRERRVYPQKDTTIEHFNRGSVFALKDILTVKNDRRGRKVIQYYTGRDDRLIYISATYAVDPLAPRPQPSALLEEYSSLLVAEKDCLQWVRDGEWEISEIIRTRTNQEQNITLETPYYDIVRIKAEESEEVREKALKALKDRLIERANIIQARLDEESAALAKRQQTFHRDRDQMSAAEEEDYERQTEESMFRIHILERRLRRHEEQALHKYYELDAKLRADGRLAALLN.

LRR repeat units follow at residues 21 to 46 (MEAR…FVEL), 51 to 74 (NPHI…LEEF), 75 to 97 (RYLR…VYRL), 99 to 120 (QLMV…IGHL), 121 to 143 (SLLK…LSTL), 144 to 166 (PKLE…LGEL), 168 to 189 (GVIK…MGQL), 190 to 212 (KKVQ…MGHL), and 214 to 235 (TLKE…KVEE). Kelch repeat units lie at residues 309–360 (MLLI…YDEE), 363–413 (RLVV…FWAG), 415–463 (MVLF…IGHG), 465–513 (LLFV…VHRD), and 515–571 (LYLL…LWNG). The segment covering 827–837 (EDRGMRSRADG) has biased composition (basic and acidic residues). Residues 827–857 (EDRGMRSRADGNADESETEGGGGLDDGEGVE) form a disordered region. Residues 1050 to 1137 (VRIKAEESEE…RRLRRHEEQA (88 aa)) are a coiled coil.

The protein belongs to the DRC7 family. Component of the nexin-dynein regulatory complex (N-DRC). Interacts with DRC5. In terms of processing, phosphorylated.

The protein resides in the cell projection. It is found in the cilium. Its subcellular location is the flagellum. It localises to the cytoplasm. The protein localises to the cytoskeleton. The protein resides in the cilium axoneme. It is found in the flagellum axoneme. Its function is as follows. Component of the nexin-dynein regulatory complex (N-DRC) a key regulator of ciliary/flagellar motility which maintains the alignment and integrity of the distal axoneme and regulates microtubule sliding in motile axonemes. Involved in the regulation of flagellar motility. This Chlamydomonas reinhardtii (Chlamydomonas smithii) protein is Dynein regulatory complex subunit 7 (DRC7).